Reading from the N-terminus, the 116-residue chain is Ig heavy chain V region 1B43 (116 aa).

An N-terminal signal peptide occupies residues 1–18; it reads MRVLILLCLFTAFPGILS. A framework-1 region spans residues 19–48; sequence DVQLQESGPDLVKPSQSLSLTCTVTGYSIT. An intrachain disulfide couples cysteine 40 to cysteine 114. Residues 49–53 are complementarity-determining-1; it reads SGYSW. The interval 54–67 is framework-2; that stretch reads HWIRQFPGNKLEWM. Residues 68–84 are complementarity-determining-2; sequence GYIHYSGNTSYNPSLKS. Positions 85-116 are framework-3; sequence RISITRDTSKNQFFLQLNSVTTEDTATYYCAR.

The protein is Ig heavy chain V region 1B43 of Mus musculus (Mouse).